Consider the following 445-residue polypeptide: MAGVSPAVFGCPDVTLGRNTAVREVQENITSVDSLTLASSNTDFAFSLYKELVLKNPDENVVFSPFSICTALALLSLGAKSNTLKEILEGLKFNLTETPEPDIHQGFRYLLDLLSQPGNQVQISTGSALFIEKHLQILAEFKEKARALYQAEAFTADFQQPLEATKLINDYVSNHTQGKIKELISDLDKRTLMVLVNYIYFKGKWEMPFDPDDTCKSEFYLDENRSVKVPMMKINNLTTPYFRDEELSCTVVELKYTGNASAMFILPDQGKMQQVEASLQPETLRNWKDSLKPRLINELCLPKFSISTDYSLEHILPELGIRELFSTQADLSAITGTKDLRTSQVVHKAVLDVAETGTEAAAGTGYQNLQCCQGVIYSMKIYFDRPFLMIISDTNTHIALFMAKVSNPESDENFLNVEYAFPQVLEIMPEYRSVCTCCLPCLTRQ.

N-linked (GlcNAc...) asparagine glycosylation is found at Asn28, Asn94, Asn174, and Asn259. The RCL stretch occupies residues Gly357–Tyr382.

Belongs to the serpin family.

In Mus musculus (Mouse), this protein is Serine protease inhibitor A3F (Serpina3f).